The sequence spans 384 residues: Protein RecA (384 aa).

76 to 83 lines the ATP pocket; sequence GPESSGKT. A disordered region spans residues 346–365; it reads QGSAEPEKAAKPEKVEKADK. Residues 350–365 are compositionally biased toward basic and acidic residues; that stretch reads EPEKAAKPEKVEKADK.

It belongs to the RecA family.

The protein localises to the cytoplasm. In terms of biological role, can catalyze the hydrolysis of ATP in the presence of single-stranded DNA, the ATP-dependent uptake of single-stranded DNA by duplex DNA, and the ATP-dependent hybridization of homologous single-stranded DNAs. It interacts with LexA causing its activation and leading to its autocatalytic cleavage. The polypeptide is Protein RecA (Polaromonas naphthalenivorans (strain CJ2)).